We begin with the raw amino-acid sequence, 560 residues long: Glucose-6-phosphate isomerase, cytosolic (560 aa).

A2 bears the N-acetylalanine mark. Catalysis depends on E361, which acts as the Proton donor. Active-site residues include H392 and K517.

It belongs to the GPI family. As to quaternary structure, homodimer.

The protein localises to the cytoplasm. It carries out the reaction alpha-D-glucose 6-phosphate = beta-D-fructose 6-phosphate. It functions in the pathway carbohydrate degradation; glycolysis; D-glyceraldehyde 3-phosphate and glycerone phosphate from D-glucose: step 2/4. Its activity is regulated as follows. Inhibited by glycerol-3-P (G3P). The chain is Glucose-6-phosphate isomerase, cytosolic (PGIC) from Arabidopsis thaliana (Mouse-ear cress).